The primary structure comprises 318 residues: uncharacterized protein (318 aa).

The stretch at 67-157 (LAFDELEKEK…SLKAIQTSQE (91 aa)) forms a coiled coil. Residues 172-318 (ESTNKVEKNA…KGFFARLFNL (147 aa)) are disordered. 2 stretches are compositionally biased toward basic and acidic residues: residues 175-193 (NKVEKNAVTEDKADSKDSK) and 219-236 (KVDKEDQISATEAIEKAS). Over residues 237-248 (VEQSKNENAAET) the composition is skewed to polar residues. 2 stretches are compositionally biased toward basic and acidic residues: residues 249–274 (SNKEATVDADAQHDAEQQVAEAHAEA) and 300–310 (SEPKPQEEKKG).

This is an uncharacterized protein from Staphylococcus aureus (strain Mu50 / ATCC 700699).